Here is a 335-residue protein sequence, read N- to C-terminus: Cobalt-precorrin-5B C(1)-methyltransferase (335 aa).

Belongs to the CbiD family.

It catalyses the reaction Co-precorrin-5B + S-adenosyl-L-methionine = Co-precorrin-6A + S-adenosyl-L-homocysteine. It participates in cofactor biosynthesis; adenosylcobalamin biosynthesis; cob(II)yrinate a,c-diamide from sirohydrochlorin (anaerobic route): step 6/10. In terms of biological role, catalyzes the methylation of C-1 in cobalt-precorrin-5B to form cobalt-precorrin-6A. The polypeptide is Cobalt-precorrin-5B C(1)-methyltransferase (Methanospirillum hungatei JF-1 (strain ATCC 27890 / DSM 864 / NBRC 100397 / JF-1)).